A 309-amino-acid polypeptide reads, in one-letter code: Ribose-phosphate pyrophosphokinase (309 aa).

Residues 42–44 and 102–103 each bind ATP; these read DEE and RQ. Mg(2+)-binding residues include H136 and D175. The active site involves K199. D-ribose 5-phosphate-binding positions include R201, D226, and 230 to 234; that span reads STGGT.

This sequence belongs to the ribose-phosphate pyrophosphokinase family. Class III (archaeal) subfamily. Mg(2+) is required as a cofactor.

It localises to the cytoplasm. It carries out the reaction D-ribose 5-phosphate + ATP = 5-phospho-alpha-D-ribose 1-diphosphate + AMP + H(+). It functions in the pathway metabolic intermediate biosynthesis; 5-phospho-alpha-D-ribose 1-diphosphate biosynthesis; 5-phospho-alpha-D-ribose 1-diphosphate from D-ribose 5-phosphate (route I): step 1/1. Involved in the biosynthesis of the central metabolite phospho-alpha-D-ribosyl-1-pyrophosphate (PRPP) via the transfer of pyrophosphoryl group from ATP to 1-hydroxyl of ribose-5-phosphate (Rib-5-P). This Aeropyrum pernix (strain ATCC 700893 / DSM 11879 / JCM 9820 / NBRC 100138 / K1) protein is Ribose-phosphate pyrophosphokinase.